Consider the following 412-residue polypeptide: Serine hydroxymethyltransferase (412 aa).

(6S)-5,6,7,8-tetrahydrofolate is bound by residues Leu117 and 121-123 (GHL). Lys226 is modified (N6-(pyridoxal phosphate)lysine). (6S)-5,6,7,8-tetrahydrofolate is bound at residue 349 to 351 (SPF).

The protein belongs to the SHMT family. Homodimer. Pyridoxal 5'-phosphate serves as cofactor.

The protein localises to the cytoplasm. It catalyses the reaction (6R)-5,10-methylene-5,6,7,8-tetrahydrofolate + glycine + H2O = (6S)-5,6,7,8-tetrahydrofolate + L-serine. The protein operates within one-carbon metabolism; tetrahydrofolate interconversion. It participates in amino-acid biosynthesis; glycine biosynthesis; glycine from L-serine: step 1/1. Its function is as follows. Catalyzes the reversible interconversion of serine and glycine with tetrahydrofolate (THF) serving as the one-carbon carrier. This reaction serves as the major source of one-carbon groups required for the biosynthesis of purines, thymidylate, methionine, and other important biomolecules. Also exhibits THF-independent aldolase activity toward beta-hydroxyamino acids, producing glycine and aldehydes, via a retro-aldol mechanism. The protein is Serine hydroxymethyltransferase of Nitratidesulfovibrio vulgaris (strain DSM 19637 / Miyazaki F) (Desulfovibrio vulgaris).